The following is a 273-amino-acid chain: Glutamate 5-kinase (273 aa).

Lysine 15 contacts ATP. 3 residues coordinate substrate: serine 55, aspartate 142, and asparagine 158. Residues 178-179 (SD) and 220-226 (TGGMLSK) each bind ATP.

This sequence belongs to the glutamate 5-kinase family.

It localises to the cytoplasm. It carries out the reaction L-glutamate + ATP = L-glutamyl 5-phosphate + ADP. It functions in the pathway amino-acid biosynthesis; L-proline biosynthesis; L-glutamate 5-semialdehyde from L-glutamate: step 1/2. Functionally, catalyzes the transfer of a phosphate group to glutamate to form L-glutamate 5-phosphate. This is Glutamate 5-kinase from Streptococcus pyogenes serotype M1.